The sequence spans 400 residues: CCA-adding enzyme (400 aa).

Positions 32 and 35 each coordinate ATP. CTP-binding residues include G32 and R35. Mg(2+) is bound by residues D45 and D47. The ATP site is built by R116, D159, R162, R165, and R168. The CTP site is built by R116, D159, R162, R165, and R168.

It belongs to the tRNA nucleotidyltransferase/poly(A) polymerase family. Bacterial CCA-adding enzyme type 3 subfamily. In terms of assembly, homodimer. Requires Mg(2+) as cofactor.

The enzyme catalyses a tRNA precursor + 2 CTP + ATP = a tRNA with a 3' CCA end + 3 diphosphate. It carries out the reaction a tRNA with a 3' CCA end + 2 CTP + ATP = a tRNA with a 3' CCACCA end + 3 diphosphate. Functionally, catalyzes the addition and repair of the essential 3'-terminal CCA sequence in tRNAs without using a nucleic acid template. Adds these three nucleotides in the order of C, C, and A to the tRNA nucleotide-73, using CTP and ATP as substrates and producing inorganic pyrophosphate. tRNA 3'-terminal CCA addition is required both for tRNA processing and repair. Also involved in tRNA surveillance by mediating tandem CCA addition to generate a CCACCA at the 3' terminus of unstable tRNAs. While stable tRNAs receive only 3'-terminal CCA, unstable tRNAs are marked with CCACCA and rapidly degraded. The polypeptide is CCA-adding enzyme (Limosilactobacillus fermentum (strain NBRC 3956 / LMG 18251) (Lactobacillus fermentum)).